Here is a 242-residue protein sequence, read N- to C-terminus: 7-cyano-7-deazaguanine synthase (242 aa).

12 to 22 provides a ligand contact to ATP; sequence FSGGQDSATCL. Positions 200, 215, 218, and 221 each coordinate Zn(2+).

It belongs to the QueC family. Requires Zn(2+) as cofactor.

The enzyme catalyses 7-carboxy-7-deazaguanine + NH4(+) + ATP = 7-cyano-7-deazaguanine + ADP + phosphate + H2O + H(+). The protein operates within purine metabolism; 7-cyano-7-deazaguanine biosynthesis. Its function is as follows. Catalyzes the ATP-dependent conversion of 7-carboxy-7-deazaguanine (CDG) to 7-cyano-7-deazaguanine (preQ(0)). The protein is 7-cyano-7-deazaguanine synthase of Gluconobacter oxydans (strain 621H) (Gluconobacter suboxydans).